The sequence spans 264 residues: Thymidylate synthase (264 aa).

Position 21 (Arg-21) interacts with dUMP. A (6R)-5,10-methylene-5,6,7,8-tetrahydrofolate-binding site is contributed by His-51. Arg-126–Arg-127 contributes to the dUMP binding site. Cys-146 functions as the Nucleophile in the catalytic mechanism. DUMP is bound by residues Arg-166 to Asp-169, Asn-177, and His-207 to Tyr-209. Asp-169 contributes to the (6R)-5,10-methylene-5,6,7,8-tetrahydrofolate binding site. Residue Ala-263 coordinates (6R)-5,10-methylene-5,6,7,8-tetrahydrofolate.

Belongs to the thymidylate synthase family. Bacterial-type ThyA subfamily. In terms of assembly, homodimer.

The protein resides in the cytoplasm. The enzyme catalyses dUMP + (6R)-5,10-methylene-5,6,7,8-tetrahydrofolate = 7,8-dihydrofolate + dTMP. The protein operates within pyrimidine metabolism; dTTP biosynthesis. Catalyzes the reductive methylation of 2'-deoxyuridine-5'-monophosphate (dUMP) to 2'-deoxythymidine-5'-monophosphate (dTMP) while utilizing 5,10-methylenetetrahydrofolate (mTHF) as the methyl donor and reductant in the reaction, yielding dihydrofolate (DHF) as a by-product. This enzymatic reaction provides an intracellular de novo source of dTMP, an essential precursor for DNA biosynthesis. This Methylobacterium nodulans (strain LMG 21967 / CNCM I-2342 / ORS 2060) protein is Thymidylate synthase.